The following is a 50-amino-acid chain: MARYRCCRSQSQSRCRRRRRRRCRRRRRRSVRQRRVCCRRYTVLRCRRRR.

Disulfide bonds link Cys-7-Cys-15 and Cys-38-Cys-46.

The protein belongs to the protamine P1 family. In terms of assembly, cross-linked by interchain disulfide bonds around the DNA-helix. In terms of tissue distribution, testis.

Its subcellular location is the nucleus. The protein localises to the chromosome. Functionally, protamines substitute for histones in the chromatin of sperm during the haploid phase of spermatogenesis. They compact sperm DNA into a highly condensed, stable and inactive complex. This Equus caballus (Horse) protein is Sperm protamine P1 (PRM1).